Here is a 184-residue protein sequence, read N- to C-terminus: Large ribosomal subunit protein uL5 (184 aa).

Belongs to the universal ribosomal protein uL5 family. In terms of assembly, part of the 50S ribosomal subunit; part of the 5S rRNA/L5/L18/L25 subcomplex. Contacts the 5S rRNA and the P site tRNA. Forms a bridge to the 30S subunit in the 70S ribosome.

Functionally, this is one of the proteins that bind and probably mediate the attachment of the 5S RNA into the large ribosomal subunit, where it forms part of the central protuberance. In the 70S ribosome it contacts protein S13 of the 30S subunit (bridge B1b), connecting the 2 subunits; this bridge is implicated in subunit movement. Contacts the P site tRNA; the 5S rRNA and some of its associated proteins might help stabilize positioning of ribosome-bound tRNAs. This Ureaplasma parvum serovar 3 (strain ATCC 27815 / 27 / NCTC 11736) protein is Large ribosomal subunit protein uL5.